The following is a 99-amino-acid chain: Small ribosomal subunit protein bS20 (99 aa).

It belongs to the bacterial ribosomal protein bS20 family.

Binds directly to 16S ribosomal RNA. The sequence is that of Small ribosomal subunit protein bS20 from Caldicellulosiruptor saccharolyticus (strain ATCC 43494 / DSM 8903 / Tp8T 6331).